The following is a 497-amino-acid chain: Malonate-semialdehyde dehydrogenase (497 aa).

Positions 148, 172, 175, 176, and 225 each coordinate NAD(+). Cys280 serves as the catalytic Nucleophile. Glu382 serves as a coordination point for NAD(+).

The protein belongs to the aldehyde dehydrogenase family.

The enzyme catalyses 3-oxopropanoate + NAD(+) + CoA + H2O = hydrogencarbonate + acetyl-CoA + NADH + H(+). Its function is as follows. Involved in the degradation of beta-alanine. Likely catalyzes the NAD(+)- and CoA-dependent oxidative decarboxylation of malonate semialdehyde (3-oxopropanoate) to acetyl-CoA. This chain is Malonate-semialdehyde dehydrogenase, found in Pseudomonas aeruginosa (strain ATCC 15692 / DSM 22644 / CIP 104116 / JCM 14847 / LMG 12228 / 1C / PRS 101 / PAO1).